Consider the following 349-residue polypeptide: Protein O-mannose kinase (349 aa).

Topologically, residues 1–19 (MGQQHGARNGLTHRELPRG) are cytoplasmic. A helical; Signal-anchor for type II membrane protein transmembrane segment spans residues 20-42 (MGLLLAMALMNVVLYVCLDHLFI). The Lumenal portion of the chain corresponds to 43–349 (SPGRATEDPR…TVMSQTKEML (307 aa)). N-linked (GlcNAc...) asparagine glycosylation is found at N66, N164, and N219. The Protein kinase domain maps to 80–349 (VRQLKLVGEG…TVMSQTKEML (270 aa)).

The protein belongs to the protein kinase superfamily. Ser/Thr protein kinase family. STKL subfamily.

It localises to the endoplasmic reticulum membrane. The enzyme catalyses 3-O-[beta-D-GalNAc-(1-&gt;3)-beta-D-GlcNAc-(1-&gt;4)-alpha-D-Man]-L-Thr-[protein] + ATP = 3-O-[beta-D-GalNAc-(1-&gt;3)-beta-D-GlcNAc-(1-&gt;4)-(O-6-P-alpha-D-Man)]-Thr-[protein] + ADP + H(+). Protein O-mannose kinase that specifically mediates phosphorylation at the 6-position of an O-mannose of the trisaccharide (N-acetylgalactosamine (GalNAc)-beta-1,3-N-acetylglucosamine (GlcNAc)-beta-1,4-mannose) to generate phosphorylated O-mannosyl trisaccharide (N-acetylgalactosamine-beta-1,3-N-acetylglucosamine-beta-1,4-(phosphate-6-)mannose). Phosphorylated O-mannosyl trisaccharide is a carbohydrate structure present in alpha-dystroglycan (DAG1), which is required for binding laminin G-like domain-containing extracellular proteins with high affinity. Only shows kinase activity when the GalNAc-beta-3-GlcNAc-beta-terminus is linked to the 4-position of O-mannose, suggesting that this disaccharide serves as the substrate recognition motif. The protein is Protein O-mannose kinase (Pomk) of Rattus norvegicus (Rat).